Here is a 277-residue protein sequence, read N- to C-terminus: Uracil phosphoribosyltransferase homolog (277 aa).

The segment at methionine 1–aspartate 69 is disordered. The span at alanine 37–aspartate 69 shows a compositional bias: low complexity. GTP is bound by residues arginine 101, arginine 110, and glutamate 144–asparagine 147. Residue arginine 154 coordinates 5-phospho-alpha-D-ribose 1-diphosphate. Residues arginine 171 and arginine 200 each contribute to the GTP site. 5-phospho-alpha-D-ribose 1-diphosphate is bound at residue tyrosine 206–threonine 214. Uracil is bound at residue threonine 267–phenylalanine 269.

It belongs to the UPRTase family.

It is found in the cytoplasm. The protein resides in the nucleus. This Gallus gallus (Chicken) protein is Uracil phosphoribosyltransferase homolog (UPRT).